Here is a 260-residue protein sequence, read N- to C-terminus: Type III pantothenate kinase (260 aa).

6–13 (DSGNTNIV) contributes to the ATP binding site. 108-111 (GADR) serves as a coordination point for substrate. Residue Asp110 is the Proton acceptor of the active site. Residue Asp130 coordinates K(+). Thr133 contacts ATP. Residue Thr185 coordinates substrate.

It belongs to the type III pantothenate kinase family. Homodimer. NH4(+) is required as a cofactor. Requires K(+) as cofactor.

It is found in the cytoplasm. The catalysed reaction is (R)-pantothenate + ATP = (R)-4'-phosphopantothenate + ADP + H(+). Its pathway is cofactor biosynthesis; coenzyme A biosynthesis; CoA from (R)-pantothenate: step 1/5. Catalyzes the phosphorylation of pantothenate (Pan), the first step in CoA biosynthesis. This Paramagnetospirillum magneticum (strain ATCC 700264 / AMB-1) (Magnetospirillum magneticum) protein is Type III pantothenate kinase.